The chain runs to 97 residues: Putative septation protein SpoVG (97 aa).

This sequence belongs to the SpoVG family.

Its function is as follows. Could be involved in septation. This Anaeromyxobacter sp. (strain Fw109-5) protein is Putative septation protein SpoVG.